Here is a 256-residue protein sequence, read N- to C-terminus: MTDLKKAAQRAIELMDLTTLNDDDTDQKVIYLCHKAKTAAGNTAAICIYPRFIPIARKTLDEIGAEDIQIATVTNFPHGNDDIAIAVLETRAAVAYGADEVDVVFPYRALMEGNETIGFELVKACKEACGEVLLKVIIESGVLADPALIRRASELSIDAGADFIKTSTGKVPVNATLEAAEIMLTVISEKNTQVGFKPAGGVRDAAQAAEFLGVAERILGADWVSPRTFRFGASSLLNSLLHTLELADAPKPTQGY.

Catalysis depends on Asp-102, which acts as the Proton donor/acceptor. Lys-165 (schiff-base intermediate with acetaldehyde) is an active-site residue. The active-site Proton donor/acceptor is the Lys-197.

The protein belongs to the DeoC/FbaB aldolase family. DeoC type 2 subfamily.

The protein localises to the cytoplasm. It catalyses the reaction 2-deoxy-D-ribose 5-phosphate = D-glyceraldehyde 3-phosphate + acetaldehyde. It functions in the pathway carbohydrate degradation; 2-deoxy-D-ribose 1-phosphate degradation; D-glyceraldehyde 3-phosphate and acetaldehyde from 2-deoxy-alpha-D-ribose 1-phosphate: step 2/2. Catalyzes a reversible aldol reaction between acetaldehyde and D-glyceraldehyde 3-phosphate to generate 2-deoxy-D-ribose 5-phosphate. The protein is Deoxyribose-phosphate aldolase of Shewanella baltica (strain OS155 / ATCC BAA-1091).